We begin with the raw amino-acid sequence, 225 residues long: Ribosomal RNA small subunit methyltransferase G (225 aa).

S-adenosyl-L-methionine is bound by residues G71, L76, 121–122 (AE), and R139. Residues 204-225 (VVEARRATPSNGRGRPGRSSRR) form a disordered region.

Belongs to the methyltransferase superfamily. RNA methyltransferase RsmG family.

The protein localises to the cytoplasm. Functionally, specifically methylates the N7 position of guanine in position 518 of 16S rRNA. This chain is Ribosomal RNA small subunit methyltransferase G, found in Mycobacterium sp. (strain KMS).